Reading from the N-terminus, the 300-residue chain is Porphobilinogen deaminase (300 aa).

Cys239 carries the S-(dipyrrolylmethanemethyl)cysteine modification.

Belongs to the HMBS family. Monomer. Dipyrromethane is required as a cofactor.

The enzyme catalyses 4 porphobilinogen + H2O = hydroxymethylbilane + 4 NH4(+). It participates in porphyrin-containing compound metabolism; protoporphyrin-IX biosynthesis; coproporphyrinogen-III from 5-aminolevulinate: step 2/4. Tetrapolymerization of the monopyrrole PBG into the hydroxymethylbilane pre-uroporphyrinogen in several discrete steps. The chain is Porphobilinogen deaminase from Francisella tularensis subsp. tularensis (strain WY96-3418).